The sequence spans 197 residues: Segregation and condensation protein B (197 aa).

Belongs to the ScpB family. As to quaternary structure, homodimer. Homodimerization may be required to stabilize the binding of ScpA to the Smc head domains. Component of a cohesin-like complex composed of ScpA, ScpB and the Smc homodimer, in which ScpA and ScpB bind to the head domain of Smc. The presence of the three proteins is required for the association of the complex with DNA.

Its subcellular location is the cytoplasm. Participates in chromosomal partition during cell division. May act via the formation of a condensin-like complex containing Smc and ScpA that pull DNA away from mid-cell into both cell halves. The sequence is that of Segregation and condensation protein B from Malacoplasma penetrans (strain HF-2) (Mycoplasma penetrans).